A 160-amino-acid chain; its full sequence is Archaemetzincin (160 aa).

His117 is a binding site for Zn(2+). The Proton acceptor role is filled by Glu118. Zn(2+) contacts are provided by His121, His127, Cys128, Cys132, Cys151, and Cys154.

Belongs to the peptidase M54 family. Monomer. Zn(2+) is required as a cofactor.

Functionally, probable zinc metalloprotease whose natural substrate is unknown. The sequence is that of Archaemetzincin from Archaeoglobus fulgidus (strain ATCC 49558 / DSM 4304 / JCM 9628 / NBRC 100126 / VC-16).